Consider the following 321-residue polypeptide: Non-canonical heme oxygenase HOZ, chloroplastic (321 aa).

A chloroplast-targeting transit peptide spans 1 to 45 (MKSLVAHFSTPLITARLVPRCIIHRASISAVSFSTVRRRFSPLTM). Residues 96-116 (CGMLSTFSQKYEGYPSGSMVD) are dimerization. 3 residues coordinate heme b: Ser130, Val134, and His135. Dimerization regions lie at residues 144-166 (KCSLLIARDPEDRTGLRITLHGD) and 205-208 (KVVR).

As to quaternary structure, homodimer. Binds to heme in the interdimer interface; the heme iron is coordinated by a fixed water molecule.

It is found in the plastid. The protein resides in the chloroplast. In terms of biological role, dimeric beta-barrel protein binding to heme and catalyzing its degradation to produce biliverdin. May function in the tetrapyrrole biosynthetic pathway. The protein is Non-canonical heme oxygenase HOZ, chloroplastic of Arabidopsis thaliana (Mouse-ear cress).